We begin with the raw amino-acid sequence, 255 residues long: 3-deoxy-manno-octulosonate cytidylyltransferase (255 aa).

This sequence belongs to the KdsB family.

The protein localises to the cytoplasm. It carries out the reaction 3-deoxy-alpha-D-manno-oct-2-ulosonate + CTP = CMP-3-deoxy-beta-D-manno-octulosonate + diphosphate. The protein operates within nucleotide-sugar biosynthesis; CMP-3-deoxy-D-manno-octulosonate biosynthesis; CMP-3-deoxy-D-manno-octulosonate from 3-deoxy-D-manno-octulosonate and CTP: step 1/1. It functions in the pathway bacterial outer membrane biogenesis; lipopolysaccharide biosynthesis. In terms of biological role, activates KDO (a required 8-carbon sugar) for incorporation into bacterial lipopolysaccharide in Gram-negative bacteria. The protein is 3-deoxy-manno-octulosonate cytidylyltransferase of Pelobacter propionicus (strain DSM 2379 / NBRC 103807 / OttBd1).